A 277-amino-acid chain; its full sequence is Uridine-cytidine kinase 1 (277 aa).

The disordered stretch occupies residues 1-30 (MASAGGEDCESPAPEADRPHQRPFLIGVSG). 30–38 (GGTASGKST) lines the ATP pocket. The active site involves D65. Substrate-binding residues include D87, Y115, H120, R169, R178, and Q186. D215 contacts ATP. The tract at residues 247-277 (SYKRTFSEPGDHPGMLTSGKRSHLESSSRPH) is disordered. Residue T251 is modified to Phosphothreonine. At S253 the chain carries Phosphoserine. Residues 268–277 (SHLESSSRPH) are compositionally biased toward basic and acidic residues.

The protein belongs to the uridine kinase family. As to expression, ubiquitous.

The catalysed reaction is uridine + ATP = UMP + ADP + H(+). It carries out the reaction cytidine + ATP = CMP + ADP + H(+). It participates in pyrimidine metabolism; CTP biosynthesis via salvage pathway; CTP from cytidine: step 1/3. The protein operates within pyrimidine metabolism; UMP biosynthesis via salvage pathway; UMP from uridine: step 1/1. In terms of biological role, phosphorylates uridine and cytidine to uridine monophosphate and cytidine monophosphate. Does not phosphorylate deoxyribonucleosides or purine ribonucleosides. Can use ATP or GTP as a phosphate donor. Can also phosphorylate cytidine and uridine nucleoside analogs such as 6-azauridine, 5-fluorouridine, 4-thiouridine, 5-bromouridine, N(4)-acetylcytidine, N(4)-benzoylcytidine, 5-fluorocytidine, 2-thiocytidine, 5-methylcytidine, and N(4)-anisoylcytidine. This Homo sapiens (Human) protein is Uridine-cytidine kinase 1 (UCK1).